Reading from the N-terminus, the 183-residue chain is Ribosome-recycling factor (183 aa).

It belongs to the RRF family.

The protein resides in the cytoplasm. Its function is as follows. Responsible for the release of ribosomes from messenger RNA at the termination of protein biosynthesis. May increase the efficiency of translation by recycling ribosomes from one round of translation to another. This chain is Ribosome-recycling factor, found in Acetivibrio thermocellus (strain ATCC 27405 / DSM 1237 / JCM 9322 / NBRC 103400 / NCIMB 10682 / NRRL B-4536 / VPI 7372) (Clostridium thermocellum).